A 195-amino-acid chain; its full sequence is Imidazoleglycerol-phosphate dehydratase (195 aa).

Belongs to the imidazoleglycerol-phosphate dehydratase family.

The protein localises to the cytoplasm. The catalysed reaction is D-erythro-1-(imidazol-4-yl)glycerol 3-phosphate = 3-(imidazol-4-yl)-2-oxopropyl phosphate + H2O. Its pathway is amino-acid biosynthesis; L-histidine biosynthesis; L-histidine from 5-phospho-alpha-D-ribose 1-diphosphate: step 6/9. In Methylorubrum extorquens (strain CM4 / NCIMB 13688) (Methylobacterium extorquens), this protein is Imidazoleglycerol-phosphate dehydratase.